Reading from the N-terminus, the 335-residue chain is Putative peroxisomal biogenesis factor 19 (335 aa).

Disordered stretches follow at residues 14–70 and 104–124; these read LETQ…LGND and YNKDINNNSDDSNNGGLPSEE. 2 stretches are compositionally biased toward low complexity: residues 22–55 and 109–119; these read PTTTKTTTTTTTTTTSNTTKTINNNNNTVTPSTI and NNNSDDSNNGG.

This sequence belongs to the peroxin-19 family.

Its subcellular location is the peroxisome. The sequence is that of Putative peroxisomal biogenesis factor 19 (pex19) from Dictyostelium discoideum (Social amoeba).